A 185-amino-acid chain; its full sequence is Cuticle protein 18.6, isoform A (185 aa).

7 consecutive repeat copies span residues 21–24, 33–36, 41–44, 54–57, 133–136, 139–142, and 150–153. Positions 64–134 constitute a Chitin-binding type R&amp;R domain; that stretch reads HPQYSFAYNV…KEAGAHPAAA (71 aa).

Component of the cuticle of migratory locust which contains more than 100 different structural proteins. This chain is Cuticle protein 18.6, isoform A, found in Locusta migratoria (Migratory locust).